A 256-amino-acid chain; its full sequence is Imidazole glycerol phosphate synthase subunit HisF (256 aa).

Active-site residues include D11 and D130.

It belongs to the HisA/HisF family. As to quaternary structure, heterodimer of HisH and HisF.

The protein localises to the cytoplasm. It carries out the reaction 5-[(5-phospho-1-deoxy-D-ribulos-1-ylimino)methylamino]-1-(5-phospho-beta-D-ribosyl)imidazole-4-carboxamide + L-glutamine = D-erythro-1-(imidazol-4-yl)glycerol 3-phosphate + 5-amino-1-(5-phospho-beta-D-ribosyl)imidazole-4-carboxamide + L-glutamate + H(+). The protein operates within amino-acid biosynthesis; L-histidine biosynthesis; L-histidine from 5-phospho-alpha-D-ribose 1-diphosphate: step 5/9. In terms of biological role, IGPS catalyzes the conversion of PRFAR and glutamine to IGP, AICAR and glutamate. The HisF subunit catalyzes the cyclization activity that produces IGP and AICAR from PRFAR using the ammonia provided by the HisH subunit. The sequence is that of Imidazole glycerol phosphate synthase subunit HisF from Prochlorococcus marinus (strain MIT 9301).